Consider the following 414-residue polypeptide: 5-aminolevulinate synthase (414 aa).

Residues arginine 22, serine 133, and lysine 152 each coordinate substrate. Pyridoxal 5'-phosphate-binding residues include serine 185, histidine 213, and threonine 241. The active site involves lysine 244. An N6-(pyridoxal phosphate)lysine modification is found at lysine 244. Pyridoxal 5'-phosphate-binding residues include threonine 273 and threonine 274. Threonine 359 contacts substrate.

It belongs to the class-II pyridoxal-phosphate-dependent aminotransferase family. As to quaternary structure, homodimer. Requires pyridoxal 5'-phosphate as cofactor.

It carries out the reaction succinyl-CoA + glycine + H(+) = 5-aminolevulinate + CO2 + CoA. The protein operates within porphyrin-containing compound metabolism; protoporphyrin-IX biosynthesis; 5-aminolevulinate from glycine: step 1/1. The polypeptide is 5-aminolevulinate synthase (hemA) (Rickettsia conorii (strain ATCC VR-613 / Malish 7)).